A 432-amino-acid polypeptide reads, in one-letter code: NADH-quinone oxidoreductase subunit D (432 aa).

It belongs to the complex I 49 kDa subunit family. As to quaternary structure, NDH-1 is composed of 14 different subunits. Subunits NuoB, C, D, E, F, and G constitute the peripheral sector of the complex.

Its subcellular location is the cell membrane. The enzyme catalyses a quinone + NADH + 5 H(+)(in) = a quinol + NAD(+) + 4 H(+)(out). NDH-1 shuttles electrons from NADH, via FMN and iron-sulfur (Fe-S) centers, to quinones in the respiratory chain. The immediate electron acceptor for the enzyme in this species is believed to be a menaquinone. Couples the redox reaction to proton translocation (for every two electrons transferred, four hydrogen ions are translocated across the cytoplasmic membrane), and thus conserves the redox energy in a proton gradient. This Mycobacteroides abscessus (strain ATCC 19977 / DSM 44196 / CCUG 20993 / CIP 104536 / JCM 13569 / NCTC 13031 / TMC 1543 / L948) (Mycobacterium abscessus) protein is NADH-quinone oxidoreductase subunit D.